Consider the following 246-residue polypeptide: Ly6/PLAUR domain-containing protein 4 (246 aa).

An N-terminal signal peptide occupies residues 1 to 26; sequence MGPQHLSPMQLLCLLGAISSLPWAEA. N-linked (GlcNAc...) asparagine glycosylation is present at Asn-117. One can recognise a UPAR/Ly6 domain in the interval 142–223; it reads CPTCVGEHSK…INIVEKALFT (82 aa). A lipid anchor (GPI-anchor amidated alanine) is attached at Ala-225. Residues 226–246 constitute a propeptide, removed in mature form; sequence GTPCRSPSWGILLGLLFAFKG.

It localises to the cell membrane. In Bos taurus (Bovine), this protein is Ly6/PLAUR domain-containing protein 4 (LYPD4).